The primary structure comprises 514 residues: Ribonuclease Y (514 aa).

Residues Val-3–Ile-23 traverse the membrane as a helical segment. Positions Thr-203–Leu-266 constitute a KH domain. The HD domain occupies Val-330–Ala-423.

Belongs to the RNase Y family.

Its subcellular location is the cell membrane. Its function is as follows. Endoribonuclease that initiates mRNA decay. This is Ribonuclease Y from Rubrobacter xylanophilus (strain DSM 9941 / JCM 11954 / NBRC 16129 / PRD-1).